The chain runs to 256 residues: Protein crossbronx-like (256 aa).

The UBC core domain occupies 17–179; the sequence is NQGYQVLAEY…AKASIVWSWK (163 aa).

The protein belongs to the ubiquitin-conjugating enzyme family. FTS subfamily.

This is Protein crossbronx-like from Drosophila mojavensis (Fruit fly).